The sequence spans 438 residues: Coenzyme A disulfide reductase (438 aa).

8–33 (GAVAGGATCASQIRRLDKESDIIIFE) is an FAD binding site. Threonine 15, glutamine 19, arginine 22, serine 39, and asparagine 42 together coordinate substrate. Cysteine 43 serves as the catalytic Nucleophile. Cysteine 43 acts as the Redox-active in catalysis. Lysine 71 lines the substrate pocket. Position 151-166 (151-166 (VLVIGAGYVSLEVLEN)) interacts with NADP(+). 267 to 277 (TNVPNIYAIGD) provides a ligand contact to FAD. A substrate-binding site is contributed by histidine 299. Residue tyrosine 419 participates in FAD binding. Lysine 427 provides a ligand contact to substrate.

This sequence belongs to the class-III pyridine nucleotide-disulfide oxidoreductase family. Homodimer. FAD is required as a cofactor.

The enzyme catalyses NADP(+) + 2 CoA = CoA-disulfide + NADPH + H(+). Catalyzes specifically the NADPH-dependent reduction of coenzyme A disulfide. The protein is Coenzyme A disulfide reductase of Staphylococcus aureus (strain JH1).